The sequence spans 239 residues: Insulin-like growth factor-binding protein 3 receptor (239 aa).

The N-terminal stretch at 1-38 (MGSCQAGHYLHFCLAHHPPLVCATLILLLLGLSGLGLG) is a signal peptide. The Extracellular segment spans residues 39 to 205 (GFLLTHRTDL…EELTLCGSRL (167 aa)). N-linked (GlcNAc...) asparagine glycosylation is found at Asn101 and Asn167. The helical transmembrane segment at 206 to 226 (LVLGFFLILFCGLCCLTAACF) threads the bilayer. The Cytoplasmic segment spans residues 227–239 (HPRRESHWSRTRL).

Interacts with IGFBP3. Interacts with CASP8.

Its subcellular location is the cell membrane. Functionally, cell death receptor specific for IGFBP3, may mediate caspase-8-dependent apoptosis upon ligand binding. In Bos taurus (Bovine), this protein is Insulin-like growth factor-binding protein 3 receptor (TMEM219).